A 390-amino-acid chain; its full sequence is S-adenosylmethionine:tRNA ribosyltransferase-isomerase (390 aa).

The interval 1–22 is disordered; sequence MTQPLSQDQHDSSSNMPTDNAE.

Belongs to the QueA family. In terms of assembly, monomer.

The protein localises to the cytoplasm. The enzyme catalyses 7-aminomethyl-7-carbaguanosine(34) in tRNA + S-adenosyl-L-methionine = epoxyqueuosine(34) in tRNA + adenine + L-methionine + 2 H(+). Its pathway is tRNA modification; tRNA-queuosine biosynthesis. In terms of biological role, transfers and isomerizes the ribose moiety from AdoMet to the 7-aminomethyl group of 7-deazaguanine (preQ1-tRNA) to give epoxyqueuosine (oQ-tRNA). This chain is S-adenosylmethionine:tRNA ribosyltransferase-isomerase, found in Psychrobacter sp. (strain PRwf-1).